We begin with the raw amino-acid sequence, 424 residues long: Serine--tRNA ligase (424 aa).

232 to 234 (TAE) is a binding site for L-serine. Residue 263 to 265 (RKE) participates in ATP binding. Glu286 is an L-serine binding site. 350–353 (EISS) contacts ATP. Ser386 is an L-serine binding site.

Belongs to the class-II aminoacyl-tRNA synthetase family. Type-1 seryl-tRNA synthetase subfamily. As to quaternary structure, homodimer. The tRNA molecule binds across the dimer.

It localises to the cytoplasm. The enzyme catalyses tRNA(Ser) + L-serine + ATP = L-seryl-tRNA(Ser) + AMP + diphosphate + H(+). The catalysed reaction is tRNA(Sec) + L-serine + ATP = L-seryl-tRNA(Sec) + AMP + diphosphate + H(+). It participates in aminoacyl-tRNA biosynthesis; selenocysteinyl-tRNA(Sec) biosynthesis; L-seryl-tRNA(Sec) from L-serine and tRNA(Sec): step 1/1. Functionally, catalyzes the attachment of serine to tRNA(Ser). Is also able to aminoacylate tRNA(Sec) with serine, to form the misacylated tRNA L-seryl-tRNA(Sec), which will be further converted into selenocysteinyl-tRNA(Sec). This is Serine--tRNA ligase from Thermodesulfovibrio yellowstonii (strain ATCC 51303 / DSM 11347 / YP87).